Here is a 219-residue protein sequence, read N- to C-terminus: MALDIKICGLKTDQAMAAALGGGASHVGFIFFAKSPRYVEPAEAGRLREAARGKAVAVAVTVDATDAFLDEIVSAMQPDMLQLHGSEHPERVAELKARYGLPVMKALPLSEAADLDRIRPFIGIADRFLFDAKPPKGSELPGGNGVAFDWRILAGLDAGVDYMLSGGLNAANIGDALRLANPPGIDISSGVESAPGVKDPALIEQFFRAVRAARDDRAA.

It belongs to the TrpF family.

It carries out the reaction N-(5-phospho-beta-D-ribosyl)anthranilate = 1-(2-carboxyphenylamino)-1-deoxy-D-ribulose 5-phosphate. Its pathway is amino-acid biosynthesis; L-tryptophan biosynthesis; L-tryptophan from chorismate: step 3/5. The sequence is that of N-(5'-phosphoribosyl)anthranilate isomerase from Mesorhizobium japonicum (strain LMG 29417 / CECT 9101 / MAFF 303099) (Mesorhizobium loti (strain MAFF 303099)).